The primary structure comprises 233 residues: Uridylate kinase (233 aa).

ATP is bound by residues 9–12 (KLSG), Gly51, and Arg55. UMP is bound by residues Asp69 and 130–137 (TGNPFFST). ATP-binding residues include Asn158, Tyr164, and Asp167.

The protein belongs to the UMP kinase family. In terms of assembly, homohexamer.

Its subcellular location is the cytoplasm. It catalyses the reaction UMP + ATP = UDP + ADP. It functions in the pathway pyrimidine metabolism; CTP biosynthesis via de novo pathway; UDP from UMP (UMPK route): step 1/1. Its activity is regulated as follows. Inhibited by UTP. Functionally, catalyzes the reversible phosphorylation of UMP to UDP. In Thermus thermophilus (strain ATCC BAA-163 / DSM 7039 / HB27), this protein is Uridylate kinase.